Consider the following 238-residue polypeptide: Ribonuclease PH (238 aa).

Residues R86 and 124-126 contribute to the phosphate site; that span reads GTR.

It belongs to the RNase PH family. As to quaternary structure, homohexameric ring arranged as a trimer of dimers.

The enzyme catalyses tRNA(n+1) + phosphate = tRNA(n) + a ribonucleoside 5'-diphosphate. Phosphorolytic 3'-5' exoribonuclease that plays an important role in tRNA 3'-end maturation. Removes nucleotide residues following the 3'-CCA terminus of tRNAs; can also add nucleotides to the ends of RNA molecules by using nucleoside diphosphates as substrates, but this may not be physiologically important. Probably plays a role in initiation of 16S rRNA degradation (leading to ribosome degradation) during starvation. The protein is Ribonuclease PH of Shigella flexneri serotype 5b (strain 8401).